The chain runs to 942 residues: UvrABC system protein A (942 aa).

Residue Gly32–Ser39 participates in ATP binding. Residues Cys251–Cys278 form a C4-type zinc finger. 2 ABC transporter domains span residues Trp308–Ile589 and Gly609–Lys937. Residue Gly641–Ser648 coordinates ATP. The segment at Cys740–Cys766 adopts a C4-type zinc-finger fold.

The protein belongs to the ABC transporter superfamily. UvrA family. As to quaternary structure, forms a heterotetramer with UvrB during the search for lesions.

Its subcellular location is the cytoplasm. The UvrABC repair system catalyzes the recognition and processing of DNA lesions. UvrA is an ATPase and a DNA-binding protein. A damage recognition complex composed of 2 UvrA and 2 UvrB subunits scans DNA for abnormalities. When the presence of a lesion has been verified by UvrB, the UvrA molecules dissociate. The protein is UvrABC system protein A of Streptococcus pyogenes serotype M3 (strain ATCC BAA-595 / MGAS315).